We begin with the raw amino-acid sequence, 183 residues long: Endoribonuclease YbeY (183 aa).

The Zn(2+) site is built by histidine 142, histidine 146, and histidine 152.

The protein belongs to the endoribonuclease YbeY family. The cofactor is Zn(2+).

It is found in the cytoplasm. In terms of biological role, single strand-specific metallo-endoribonuclease involved in late-stage 70S ribosome quality control and in maturation of the 3' terminus of the 16S rRNA. In Trichodesmium erythraeum (strain IMS101), this protein is Endoribonuclease YbeY.